The chain runs to 93 residues: YcgL domain-containing protein Spea_2443 (93 aa).

In terms of domain architecture, YcgL spans Met-1 to Lys-85.

The sequence is that of YcgL domain-containing protein Spea_2443 from Shewanella pealeana (strain ATCC 700345 / ANG-SQ1).